The following is a 128-amino-acid chain: Large ribosomal subunit protein bL12 (128 aa).

The protein belongs to the bacterial ribosomal protein bL12 family. In terms of assembly, homodimer. Part of the ribosomal stalk of the 50S ribosomal subunit. Forms a multimeric L10(L12)X complex, where L10 forms an elongated spine to which 2 to 4 L12 dimers bind in a sequential fashion. Binds GTP-bound translation factors.

Forms part of the ribosomal stalk which helps the ribosome interact with GTP-bound translation factors. Is thus essential for accurate translation. This Saccharopolyspora erythraea (strain ATCC 11635 / DSM 40517 / JCM 4748 / NBRC 13426 / NCIMB 8594 / NRRL 2338) protein is Large ribosomal subunit protein bL12.